The primary structure comprises 31 residues: Photosystem II reaction center protein T (31 aa).

A helical membrane pass occupies residues serine 3–phenylalanine 23.

It belongs to the PsbT family. As to quaternary structure, PSII is composed of 1 copy each of membrane proteins PsbA, PsbB, PsbC, PsbD, PsbE, PsbF, PsbH, PsbI, PsbJ, PsbK, PsbL, PsbM, PsbT, PsbX, PsbY, PsbZ, Psb30/Ycf12, peripheral proteins PsbO, CyanoQ (PsbQ), PsbU, PsbV and a large number of cofactors. It forms dimeric complexes.

It is found in the cellular thylakoid membrane. Functionally, found at the monomer-monomer interface of the photosystem II (PS II) dimer, plays a role in assembly and dimerization of PSII. PSII is a light-driven water plastoquinone oxidoreductase, using light energy to abstract electrons from H(2)O, generating a proton gradient subsequently used for ATP formation. The chain is Photosystem II reaction center protein T from Picosynechococcus sp. (strain ATCC 27264 / PCC 7002 / PR-6) (Agmenellum quadruplicatum).